The chain runs to 316 residues: Pantothenate kinase (316 aa).

ATP is bound at residue 96 to 103; the sequence is GSVAVGKS.

This sequence belongs to the prokaryotic pantothenate kinase family.

Its subcellular location is the cytoplasm. It carries out the reaction (R)-pantothenate + ATP = (R)-4'-phosphopantothenate + ADP + H(+). The protein operates within cofactor biosynthesis; coenzyme A biosynthesis; CoA from (R)-pantothenate: step 1/5. This Shouchella clausii (strain KSM-K16) (Alkalihalobacillus clausii) protein is Pantothenate kinase.